The chain runs to 364 residues: Probable secreted lipase phiG (364 aa).

An N-terminal signal peptide occupies residues 1–18; sequence MMPFMDLILSILVSSVLL. Asn-49 is a glycosylation site (N-linked (GlcNAc...) asparagine). Ser-203 acts as the Nucleophile in catalysis. Asn-262 carries an N-linked (GlcNAc...) asparagine glycan.

Belongs to the AB hydrolase superfamily.

Its subcellular location is the secreted. It carries out the reaction a carboxylic ester + H2O = an alcohol + a carboxylate + H(+). Its function is as follows. Part of the gene cluster that mediates the biosynthesis of the antihypercholesterolemic agents phomoidrides which are dimeric anhydrides. The function of phiG within the pathway has still to be determined. The pathway begins with the highly reducing polyketide synthase phiA that catalyzes the formation of a C12-fatty acyl-ACP, starting from one acetate and 5 malonate units. The hydrolase phiM is involved in the release of the C12-fatty acyl chain from phiA. The alkylcitrate synthase (ACS) phiJ and the alkylcitrate dehydratase (ACDH) phiI then give rise to decarboxylated monomeric anhydrides by coupling the C12-fatty acyl chain with oxalacetic acid. The cyclase phiC is responsible for the dimerization of the monomeric anhydrides which leads to the production of prephomoidride that contains the characteristic bicyclo[4.3.1]deca-1,6-diene system of phomoidrides. Iterative oxidation catalyzed by the alpha-ketoglutarate-dependent dioxygenase phiK produced then phomoidride A. Finally, the methyltransferase phiE converts phomoidride A to phomoidride B via an acetalization reaction. The phosphatidylethanolamine-binding protein phiB and phiN are not essential for dimerization and their functions have still to be determined. The sequence is that of Probable secreted lipase phiG from Fungal sp. (strain ATCC 74256).